Reading from the N-terminus, the 399-residue chain is Peroxisome assembly protein 12 (399 aa).

A disordered region spans residues 1-24; it reads MSFYSNLPSAGQSSRGSSTSGRNG. The Peroxisomal matrix segment spans residues 1–33; sequence MSFYSNLPSAGQSSRGSSTSGRNGVGLEPLYPT. Low complexity predominate over residues 9–24; sequence SAGQSSRGSSTSGRNG. The chain crosses the membrane as a helical span at residues 34-62; sequence IFEIMSSQEIDSLLPASIRYLLANHLVAN. The Cytoplasmic segment spans residues 63 to 67; the sequence is FPNRY. The helical transmembrane segment at 68-92 threads the bilayer; the sequence is TLRLNKYFFEWFQAIKGFVEWYHLK. The Peroxisomal matrix portion of the chain corresponds to 93–136; sequence TYNSTFIDRFYGLQLFSSRDRNLALTQCLNPKGQSEWPQGLQLN. The chain crosses the membrane as a helical span at residues 137-168; sequence QQQKSVIFLEKIILPYITAKLDEILEKISMNN. Residues 169–171 lie on the Cytoplasmic side of the membrane; that stretch reads IFS. A helical transmembrane segment spans residues 172–208; sequence SDETENKWPKRAFLRIYPFIKKLLALSNLLVKLLFLT. Residues 209 to 277 lie on the Peroxisomal matrix side of the membrane; the sequence is KRTGSVSLLQ…PRFLTFMGSQ (69 aa). A helical transmembrane segment spans residues 278 to 305; the sequence is FFPTFIFVLRVYQWWTTQDMTTKLQKRV. At 306-399 the chain is on the cytoplasmic side; it reads NDLDEDIPRP…VVTGIRKLLI (94 aa). The Zn(2+) site is built by cysteine 334, cysteine 337, cysteine 354, and cysteine 357. The segment at 334–373 adopts an RING-type; degenerate zinc-finger fold; sequence CPVCEKTVQNPCVLETGYVACYPCAISYLVNNEGHCPVTN.

This sequence belongs to the pex2/pex10/pex12 family. Component of the PEX2-PEX10-PEX12 retrotranslocation channel, composed of PEX2, PEX10 and PEX12.

It is found in the peroxisome membrane. The protein operates within protein modification; protein ubiquitination. Functionally, component of a retrotranslocation channel required for peroxisome organization by mediating export of the PEX5 receptor from peroxisomes to the cytosol, thereby promoting PEX5 recycling. The retrotranslocation channel is composed of PEX2, PEX10 and PEX12; each subunit contributing transmembrane segments that coassemble into an open channel that specifically allows the passage of PEX5 through the peroxisomal membrane. PEX12 also regulates PEX5 recycling by activating the E3 ubiquitin-protein ligase activity of PEX10. When PEX5 recycling is compromised, PEX12 stimulates PEX10-mediated polyubiquitination of PEX5, leading to its subsequent degradation. In Saccharomyces cerevisiae (strain ATCC 204508 / S288c) (Baker's yeast), this protein is Peroxisome assembly protein 12.